Reading from the N-terminus, the 361-residue chain is Probable dual-specificity RNA methyltransferase RlmN (361 aa).

Glu-91 (proton acceptor) is an active-site residue. Residues 97 to 329 enclose the Radical SAM core domain; it reads QHYGLSVCVT…KKKGGNCVVR (233 aa). Cys-104 and Cys-340 are disulfide-bonded. Residues Cys-111, Cys-115, and Cys-118 each contribute to the [4Fe-4S] cluster site. Residues 163–164, Ser-195, 218–220, and Asn-296 contribute to the S-adenosyl-L-methionine site; these read GE and SLH. Cys-340 acts as the S-methylcysteine intermediate in catalysis.

This sequence belongs to the radical SAM superfamily. RlmN family. It depends on [4Fe-4S] cluster as a cofactor.

The protein resides in the cytoplasm. The enzyme catalyses adenosine(2503) in 23S rRNA + 2 reduced [2Fe-2S]-[ferredoxin] + 2 S-adenosyl-L-methionine = 2-methyladenosine(2503) in 23S rRNA + 5'-deoxyadenosine + L-methionine + 2 oxidized [2Fe-2S]-[ferredoxin] + S-adenosyl-L-homocysteine. It carries out the reaction adenosine(37) in tRNA + 2 reduced [2Fe-2S]-[ferredoxin] + 2 S-adenosyl-L-methionine = 2-methyladenosine(37) in tRNA + 5'-deoxyadenosine + L-methionine + 2 oxidized [2Fe-2S]-[ferredoxin] + S-adenosyl-L-homocysteine. Functionally, specifically methylates position 2 of adenine 2503 in 23S rRNA and position 2 of adenine 37 in tRNAs. The sequence is that of Probable dual-specificity RNA methyltransferase RlmN from Streptococcus pneumoniae serotype 2 (strain D39 / NCTC 7466).